The following is a 338-amino-acid chain: Lumican (338 aa).

Residues 1–18 form the signal peptide; it reads MNVCTFTLVLALVGSVSG. Gln19 bears the Pyrrolidone carboxylic acid mark. A sulfotyrosine mark is found at Tyr20, Tyr21, Tyr23, and Tyr30. The 39-residue stretch at 28-66 folds into the LRRNT domain; the sequence is FMYGELSPNCAPECNCPHSYPTAMYCDDLKLKSVPMVPP. LRR repeat units follow at residues 67–88, 91–114, 117–137, 138–159, 160–181, 185–205, 206–227, and 230–250; these read GIKY…AFEN, DLQW…VFSK, QLKK…PLPK, SLQD…DGLV, NLTF…ASLK, SLEY…GLPT, SLLT…YFNR, and GLQY…PGNS. The N-linked (GlcNAc...) (keratan sulfate) asparagine glycan is linked to Asn88. Asn127 is a glycosylation site (N-linked (GlcNAc...) (keratan sulfate) asparagine). Asn160 carries an N-linked (GlcNAc...) (keratan sulfate) asparagine glycan. N-linked (GlcNAc...) (keratan sulfate) asparagine glycosylation is present at Asn252. 2 LRR repeats span residues 255–276 and 277–296; these read SLLE…NENL and ENYY…SFCK. Cys295 and Cys328 are disulfide-bonded. The residue at position 304 (Ser304) is a Phosphoserine. The LRR 11 repeat unit spans residues 305–326; sequence KIKHLRLDGNPLTQSSLPPDMY.

Belongs to the small leucine-rich proteoglycan (SLRP) family. SLRP class II subfamily. Binds to laminin. Contains keratan sulfate.

Its subcellular location is the secreted. The protein localises to the extracellular space. It localises to the extracellular matrix. This is Lumican (Lum) from Rattus norvegicus (Rat).